Consider the following 185-residue polypeptide: 3-hydroxyanthranilate 3,4-dioxygenase (185 aa).

R44 serves as a coordination point for O2. Residues H48, E54, and H95 each contribute to the Fe cation site. E54 lines the substrate pocket. Positions 99 and 109 each coordinate substrate. Residues C124, C127, C161, and C164 each coordinate a divalent metal cation.

Belongs to the 3-HAO family. Fe(2+) is required as a cofactor.

It is found in the cytoplasm. It carries out the reaction 3-hydroxyanthranilate + O2 = (2Z,4Z)-2-amino-3-carboxymuconate 6-semialdehyde. It participates in cofactor biosynthesis; NAD(+) biosynthesis; quinolinate from L-kynurenine: step 3/3. Its function is as follows. Catalyzes the oxidative ring opening of 3-hydroxyanthranilate to 2-amino-3-carboxymuconate semialdehyde, which spontaneously cyclizes to quinolinate. This chain is 3-hydroxyanthranilate 3,4-dioxygenase, found in Podospora anserina (strain S / ATCC MYA-4624 / DSM 980 / FGSC 10383) (Pleurage anserina).